Here is a 535-residue protein sequence, read N- to C-terminus: Ribonuclease Y (535 aa).

Residues 4-24 (IILLIVSALIGLILGYALISI) form a helical membrane-spanning segment. The tract at residues 118–141 (ENLSSKEKVLDSKEQSLTDKSKHI) is disordered. The region spanning 225–285 (TITSVHLPDD…IRREIARMTL (61 aa)) is the KH domain. In terms of domain architecture, HD spans 351-444 (VLRHSVEVGK…VAAADALSSA (94 aa)).

This sequence belongs to the RNase Y family.

It is found in the cell membrane. Endoribonuclease that initiates mRNA decay. In Streptococcus pyogenes serotype M2 (strain MGAS10270), this protein is Ribonuclease Y.